A 59-amino-acid polypeptide reads, in one-letter code: Large ribosomal subunit protein bL32c (59 aa).

The disordered stretch occupies residues 1-20; sequence MAVPKKRTSKSKKRIRKSVW.

This sequence belongs to the bacterial ribosomal protein bL32 family.

It is found in the plastid. The protein resides in the chloroplast. This is Large ribosomal subunit protein bL32c from Angiopteris evecta (Mule's foot fern).